A 705-amino-acid polypeptide reads, in one-letter code: Ion-translocating oxidoreductase complex subunit C (705 aa).

2 consecutive 4Fe-4S ferredoxin-type domains span residues 368–397 and 407–435; these read MGET…QQLY and KATA…LVQY. [4Fe-4S] cluster-binding residues include Cys377, Cys380, Cys383, Cys387, Cys416, Cys419, Cys422, and Cys426. Positions 536–684 are disordered; the sequence is RARQAENIPA…EPVDPRKAAV (149 aa).

Belongs to the 4Fe4S bacterial-type ferredoxin family. RnfC subfamily. The complex is composed of six subunits: RnfA, RnfB, RnfC, RnfD, RnfE and RnfG. [4Fe-4S] cluster is required as a cofactor.

Its subcellular location is the cell inner membrane. Functionally, part of a membrane-bound complex that couples electron transfer with translocation of ions across the membrane. This chain is Ion-translocating oxidoreductase complex subunit C, found in Citrobacter koseri (strain ATCC BAA-895 / CDC 4225-83 / SGSC4696).